A 449-amino-acid polypeptide reads, in one-letter code: GPI mannosyltransferase 2 (449 aa).

Over 1 to 7 the chain is Cytoplasmic; the sequence is MTEKVTK. The chain crosses the membrane as a helical span at residues 8 to 28; the sequence is LALASRLIVLLVQLVANGALP. Residues 29-82 lie on the Lumenal side of the membrane; that stretch reads EHKPDVFRMPVSSDQNASWIDKVIKRCLGGLRHWDGEYFLHIAENLYSYENTLA. N-linked (GlcNAc...) asparagine glycosylation is present at N44. The helical transmembrane segment at 83–103 threads the bilayer; that stretch reads FYPLYPVVVRHVGQAVEAIGI. The Cytoplasmic segment spans residues 104 to 109; sequence SLSQES. A helical transmembrane segment spans residues 110–130; that stretch reads ILLVVAVALNFWLFCESANLL. The Lumenal portion of the chain corresponds to 131–148; the sequence is FQLTQVLFNDLNKSWNAA. N142 carries an N-linked (GlcNAc...) asparagine glycan. Residues 149 to 169 form a helical membrane-spanning segment; it reads LIYCFNPATIFFTAAYSETFF. At 170–196 the chain is on the cytoplasmic side; it reads AYSSLHLMLECSKPTGSFRYLRLGTAL. Residues 197–217 traverse the membrane as a helical segment; sequence AACLLCRSNGLITLGYPLYFF. Topologically, residues 218 to 235 are lumenal; sequence GRQLLLKNKEPNTCMQLT. A helical membrane pass occupies residues 236–256; the sequence is QMTLTILGAIGILHTYYFYIY. Residues 257-368 are Cytoplasmic-facing; sequence RLYCLPNTRP…GFKELIRDHT (112 aa). Residues 369–389 form a helical membrane-spanning segment; sequence TFPFVLHAAILTLVCTVYVHI. The Lumenal segment spans residues 390-423; it reads QVSTRLLASATPVFYWFAADHMPKTLAQLKLRSK. A helical transmembrane segment spans residues 424–444; that stretch reads AGALFVWCTTYSLVGTVLFSN. At 445–449 the chain is on the cytoplasmic side; the sequence is NYPWT.

This sequence belongs to the PIGV family.

It is found in the endoplasmic reticulum membrane. It participates in glycolipid biosynthesis; glycosylphosphatidylinositol-anchor biosynthesis. Mannosyltransferase involved in glycosylphosphatidylinositol-anchor biosynthesis. Transfers the second mannose to the glycosylphosphatidylinositol during GPI precursor assembly. Required for the GPI-mediated endoplasmic reticulum exit and proper targeting to the cell surface of chp. Required for GPI-mediated membrane attachment of chp, qsm and Cont. Essential for microvillar stability in the rhabdomere. The sequence is that of GPI mannosyltransferase 2 from Drosophila melanogaster (Fruit fly).